A 150-amino-acid polypeptide reads, in one-letter code: MSDINEIEIPSRKDEIRQVTPKDPMHEIEDKSTYHAKIKKSDSGTVLGAIPLNSRSSSNSSVTSTGQSSRRVTKKTTKKKKKNACYFDTCSSAASKFIGDCNFCKGHFCSKHRLMENHACNGLTSCKEQLHQRNADKLEAEQTKAPKIQI.

The segment at 1-82 (MSDINEIEIP…TKKTTKKKKK (82 aa)) is disordered. Serine 2 is modified (N-acetylserine). Basic and acidic residues predominate over residues 23–33 (DPMHEIEDKST). Residues serine 43 and serine 54 each carry the phosphoserine modification. Low complexity predominate over residues 53-70 (NSRSSSNSSVTSTGQSSR). Positions 71–82 (RVTKKTTKKKKK) are enriched in basic residues. The AN1-type zinc-finger motif lies at 79-128 (KKKKNACYFDTCSSAASKFIGDCNFCKGHFCSKHRLMENHACNGLTSCKE). Positions 85, 90, 101, 104, 109, 112, 118, and 120 each coordinate Zn(2+).

The protein localises to the nucleus. Its function is as follows. May have a role in protecting cells from metalloid-induced proteotoxicity. This Saccharomyces cerevisiae (strain ATCC 204508 / S288c) (Baker's yeast) protein is AN1-type zinc finger protein TMC1.